Consider the following 224-residue polypeptide: MKKLLLIAATSATILSSSVSFAEGMDHEWYLRIDTGAAMFNEEKDKATGVKLKSNTTVPVALGIGYYISENFRADLTLGTIIGGKLKKSGAATNAPFTRTNVSASHKPTITRLLINGYVDLTNFDMFDVFAGAGVGPALVKEKITYNGITGLSSNTKNRTNISYKLTLGTSAQIVDGVKVELAYSWIDDGRTKSKNVIYQGTSVPTGGMHYQSHNLTAGIRFDI.

An N-terminal signal peptide occupies residues 1–22 (MKKLLLIAATSATILSSSVSFA).

In Rickettsia rickettsii (strain Sheila Smith), this protein is Putative adhesin A1G_07050.